Here is a 280-residue protein sequence, read N- to C-terminus: Bicarbonate transport system permease protein CmpB (280 aa).

A run of 7 helical transmembrane segments spans residues 32 to 52 (PIFG…AGLI), 99 to 119 (YSLA…QPLL), 126 to 146 (IFQF…LVAL), 153 to 173 (AIFV…TEGV), 198 to 218 (ILIP…IGLA), 219 to 239 (WLAI…GFFI), and 251 to 271 (IILA…GIAY). In terms of domain architecture, ABC transmembrane type-1 spans 88 to 266 (TLASLGRVAQ…YIGAVGLLLD (179 aa)).

Belongs to the binding-protein-dependent transport system permease family. In terms of assembly, the complex is composed of two ATP-binding proteins (CmpC and CmpD), a transmembrane protein (CmpB) and a solute-binding protein (CmpA).

Its subcellular location is the cell inner membrane. Its function is as follows. Part of the ABC transporter complex CmpABCD involved in bicarbonate transport. Probably responsible for the translocation of the substrate across the membrane. The polypeptide is Bicarbonate transport system permease protein CmpB (cmpB) (Synechocystis sp. (strain ATCC 27184 / PCC 6803 / Kazusa)).